The sequence spans 668 residues: COBRA-like protein 11 (668 aa).

A signal peptide spans Met-1–Ala-29. N-linked (GlcNAc...) asparagine glycosylation is found at Asn-69, Asn-125, Asn-254, Asn-318, Asn-329, Asn-358, Asn-412, Asn-432, Asn-473, Asn-552, Asn-560, and Asn-579. The GPI-anchor amidated serine moiety is linked to residue Ser-636. Residues Ser-637 to Val-668 constitute a propeptide, removed in mature form.

This sequence belongs to the COBRA family. In terms of tissue distribution, mostly expressed in flowers, stamen, anthers and pollen, and, to a lower extent, possibly in roots, stems, leaves and siliques.

Its subcellular location is the cell membrane. Functionally, involved in the deposition of apical pectin cap and cellulose microfibrils in pollen tubes. Implicated in pollen tubes growth in the female transmitting tract of pistil and toward micropyles, via the perception of ovule guidance cues. In Arabidopsis thaliana (Mouse-ear cress), this protein is COBRA-like protein 11.